The following is a 184-amino-acid chain: Cobalamin adenosyltransferase (184 aa).

A disordered region spans residues 1-21 (MGNRLSKIATRTGDAGTTGLG). Residues 10–13 (TRTG), 18–19 (TG), K28, 130–134 (RRAER), and N154 each bind ATP.

Belongs to the Cob(I)alamin adenosyltransferase family. As to quaternary structure, homotrimer.

It catalyses the reaction 2 cob(II)alamin + AH2 + 2 ATP = 2 adenosylcob(III)alamin + 2 triphosphate + A + 2 H(+). With respect to regulation, is potentially allosterically regulated by GTP/GDP, which enhances its affinity for AdoCbl by 5-fold. Binds cob(II)alamin weakly in the absence of ATP. The presence of ATP (but not GTP or GDP) increases the affinity of cob(II)alamin for the enzyme, and stoichiometric binding is observed. GTP blocks the transfer of cob(II)alamin to IcmF from ATR, thus averting its reconstitution with inactive cofactor. Its function is as follows. Adenosyltransferase that catalyzes the conversion of cob(II)alamin to adenosylcob(III)alamin (AdoCbl) in the presence of ATP and an electron donor. Acts as an accessory protein of IcmF that functions in cofactor repair, since IcmF is prone to inactivation during catalytic turnover due to the occasional loss of the 5'-deoxyadenosine moiety and formation of the inactive cob(II)alamin cofactor in its active site. Thus, receives and repairs the inactive cofactor, which is then reloaded onto IcmF in a GTPase-gated step. This chain is Cobalamin adenosyltransferase, found in Cupriavidus metallidurans (strain ATCC 43123 / DSM 2839 / NBRC 102507 / CH34) (Ralstonia metallidurans).